The primary structure comprises 805 residues: DNA gyrase subunit B (805 aa).

Residues 431 to 546 (CEMYIVEGDS…NECVYIAQPP (116 aa)) enclose the Toprim domain. Positions 437, 511, and 513 each coordinate Mg(2+).

This sequence belongs to the type II topoisomerase GyrB family. As to quaternary structure, heterotetramer, composed of two GyrA and two GyrB chains. In the heterotetramer, GyrA contains the active site tyrosine that forms a transient covalent intermediate with DNA, while GyrB binds cofactors and catalyzes ATP hydrolysis. The cofactor is Mg(2+). Mn(2+) is required as a cofactor. It depends on Ca(2+) as a cofactor.

It is found in the cytoplasm. The enzyme catalyses ATP-dependent breakage, passage and rejoining of double-stranded DNA.. Its function is as follows. A type II topoisomerase that negatively supercoils closed circular double-stranded (ds) DNA in an ATP-dependent manner to modulate DNA topology and maintain chromosomes in an underwound state. Negative supercoiling favors strand separation, and DNA replication, transcription, recombination and repair, all of which involve strand separation. Also able to catalyze the interconversion of other topological isomers of dsDNA rings, including catenanes and knotted rings. Type II topoisomerases break and join 2 DNA strands simultaneously in an ATP-dependent manner. This chain is DNA gyrase subunit B, found in Chlamydia pneumoniae (Chlamydophila pneumoniae).